Consider the following 150-residue polypeptide: Large ribosomal subunit protein bL9 (150 aa).

Belongs to the bacterial ribosomal protein bL9 family.

Functionally, binds to the 23S rRNA. In Yersinia pseudotuberculosis serotype I (strain IP32953), this protein is Large ribosomal subunit protein bL9.